A 442-amino-acid chain; its full sequence is Trigger factor (442 aa).

One can recognise a PPIase FKBP-type domain in the interval Gly-162–Pro-247.

Belongs to the FKBP-type PPIase family. Tig subfamily.

The protein localises to the cytoplasm. The enzyme catalyses [protein]-peptidylproline (omega=180) = [protein]-peptidylproline (omega=0). In terms of biological role, involved in protein export. Acts as a chaperone by maintaining the newly synthesized protein in an open conformation. Functions as a peptidyl-prolyl cis-trans isomerase. In Lactobacillus acidophilus (strain ATCC 700396 / NCK56 / N2 / NCFM), this protein is Trigger factor.